Consider the following 140-residue polypeptide: Regulator of ribonuclease activity B (140 aa).

Positions 115 to 140 (FEDPNAQDDDEDDGEAIDEDDNGIRH) are disordered. The span at 119 to 140 (NAQDDDEDDGEAIDEDDNGIRH) shows a compositional bias: acidic residues.

This sequence belongs to the RraB family. Interacts with the C-terminal region of Rne.

It is found in the cytoplasm. Functionally, globally modulates RNA abundance by binding to RNase E (Rne) and regulating its endonucleolytic activity. Can modulate Rne action in a substrate-dependent manner by altering the composition of the degradosome. This chain is Regulator of ribonuclease activity B, found in Pantoea ananatis (strain LMG 20103).